Consider the following 410-residue polypeptide: Peptidase T (410 aa).

A Zn(2+)-binding site is contributed by His79. Residue Asp81 is part of the active site. Asp142 provides a ligand contact to Zn(2+). The active-site Proton acceptor is Glu176. Residues Glu177, Asp199, and His381 each coordinate Zn(2+).

It belongs to the peptidase M20B family. The cofactor is Zn(2+).

The protein resides in the cytoplasm. The catalysed reaction is Release of the N-terminal residue from a tripeptide.. Cleaves the N-terminal amino acid of tripeptides. In Bacillus cereus (strain B4264), this protein is Peptidase T.